Reading from the N-terminus, the 190-residue chain is UPF0301 protein PSPTO_5037 (190 aa).

It belongs to the UPF0301 (AlgH) family.

The polypeptide is UPF0301 protein PSPTO_5037 (Pseudomonas syringae pv. tomato (strain ATCC BAA-871 / DC3000)).